The primary structure comprises 135 residues: Poly [ADP-ribose] polymerase 1 (135 aa).

The PARP alpha-helical domain maps to 1 to 21 (QAKVEMLDNLLDIEVAYSLLK). In terms of domain architecture, PARP catalytic spans 30-135 (DPIDINYEKL…APVTGYMFGK (106 aa)). Residues 104–106 (HGS), G113, and R120 each bind NAD(+). Residue K135 is part of the active site.

The protein belongs to the ARTD/PARP family. As to quaternary structure, homodimer; PARP-type zinc-fingers from separate parp1 molecules form a dimer module that specifically recognizes DNA strand breaks. Poly-ADP-ribosylated on serine, glutamate and aspartate residues by autocatalysis. Auto-ADP-ribosylation on serine takes place following interaction with HPF1. Auto poly-ADP-ribosylation on serine residues promotes its dissociation from chromatin.

The protein localises to the chromosome. It localises to the nucleus. The protein resides in the nucleolus. Its subcellular location is the cytoplasm. It is found in the cytosol. The enzyme catalyses NAD(+) + (ADP-D-ribosyl)n-acceptor = nicotinamide + (ADP-D-ribosyl)n+1-acceptor + H(+).. It carries out the reaction L-seryl-[protein] + NAD(+) = O-(ADP-D-ribosyl)-L-seryl-[protein] + nicotinamide + H(+). The catalysed reaction is L-aspartyl-[protein] + NAD(+) = 4-O-(ADP-D-ribosyl)-L-aspartyl-[protein] + nicotinamide. It catalyses the reaction L-glutamyl-[protein] + NAD(+) = 5-O-(ADP-D-ribosyl)-L-glutamyl-[protein] + nicotinamide. The enzyme catalyses L-tyrosyl-[protein] + NAD(+) = O-(ADP-D-ribosyl)-L-tyrosyl-[protein] + nicotinamide + H(+). It carries out the reaction L-histidyl-[protein] + NAD(+) = N(tele)-(ADP-D-ribosyl)-L-histidyl-[protein] + nicotinamide + H(+). With respect to regulation, ADP-ribosyltransferase activity is regulated via an allosteric activation mechanism. In absence of activation signal, parp1 is autoinhibited by the PARP alpha-helical domain (also named HD region), which prevents effective NAD(+)-binding. Activity is highly stimulated by signals, such as DNA strand breaks. Binding to damaged DNA unfolds the PARP alpha-helical domain, relieving autoinhibition. Poly-ADP-ribosyltransferase activity is tightly regulated and parp1 is removed from damaged chromatin following initial poly-ADP-ribosylation of chromatin to avoid prolonged residence (trapping) that has cytotoxic consequences. A number of factors or post-translational modifications (auto-poly-ADP-ribosylation) promote parp1 removal from chromatin. Functionally, poly-ADP-ribosyltransferase that mediates poly-ADP-ribosylation of proteins and plays a key role in DNA repair. Mediates glutamate, aspartate, serine, histidine or tyrosine ADP-ribosylation of proteins: the ADP-D-ribosyl group of NAD(+) is transferred to the acceptor carboxyl group of target residues and further ADP-ribosyl groups are transferred to the 2'-position of the terminal adenosine moiety, building up a polymer with an average chain length of 20-30 units. Serine ADP-ribosylation of proteins constitutes the primary form of ADP-ribosylation of proteins in response to DNA damage. Specificity for the different amino acids is conferred by interacting factors, such as hpf1 and nmnat1. Following interaction with hpf1, catalyzes serine ADP-ribosylation of target proteins; hpf1 confers serine specificity by completing the parp1 active site. Also catalyzes tyrosine ADP-ribosylation of target proteins following interaction with hpf1. Following interaction with nmnat1, catalyzes glutamate and aspartate ADP-ribosylation of target proteins; nmnat1 confers glutamate and aspartate specificity. Parp1 initiates the repair of DNA breaks: recognizes and binds DNA breaks within chromatin and recruits hpf1, licensing serine ADP-ribosylation of target proteins, such as histones (H2BS6ADPr and H3S10ADPr), thereby promoting decompaction of chromatin and the recruitment of repair factors leading to the reparation of DNA strand breaks. In addition to base excision repair (BER) pathway, also involved in double-strand breaks (DSBs) repair. Mediates the poly-ADP-ribosylation of a number of proteins. In addition to proteins, also able to ADP-ribosylate DNA: catalyzes ADP-ribosylation of DNA strand break termini containing terminal phosphates and a 2'-OH group in single- and double-stranded DNA, respectively. Parp1-mediated DNA repair in neurons plays a role in sleep: senses DNA damage in neurons and promotes sleep, facilitating efficient DNA repair. In addition to DNA repair, also involved in other processes, such as transcription regulation, programmed cell death, membrane repair, adipogenesis and innate immunity. Acts as a repressor of transcription: binds to nucleosomes and modulates chromatin structure in a manner similar to histone H1, thereby altering RNA polymerase II. Acts both as a positive and negative regulator of transcription elongation, depending on the context. Poly-ADP-ribose chains generated by parp1 also play a role in poly-ADP-ribose-dependent cell death, a process named parthanatos. Also acts as a negative regulator of the cGAS-STING pathway by mediating poly-ADP-ribosylation and inactivation of cgas. Acts as a negative regulator of adipogenesis by catalyzing poly ADP-ribosylation of histone H2B on 'Glu-35' (H2BE35ADPr). This is Poly [ADP-ribose] polymerase 1 (parp1) from Oncorhynchus masou (Cherry salmon).